The chain runs to 322 residues: Methionyl-tRNA formyltransferase (322 aa).

113–116 (SLLP) contacts (6S)-5,6,7,8-tetrahydrofolate.

This sequence belongs to the Fmt family.

It carries out the reaction L-methionyl-tRNA(fMet) + (6R)-10-formyltetrahydrofolate = N-formyl-L-methionyl-tRNA(fMet) + (6S)-5,6,7,8-tetrahydrofolate + H(+). Functionally, attaches a formyl group to the free amino group of methionyl-tRNA(fMet). The formyl group appears to play a dual role in the initiator identity of N-formylmethionyl-tRNA by promoting its recognition by IF2 and preventing the misappropriation of this tRNA by the elongation apparatus. The polypeptide is Methionyl-tRNA formyltransferase (Blochmanniella pennsylvanica (strain BPEN)).